A 416-amino-acid chain; its full sequence is Tyrosine--tRNA ligase (416 aa).

Residue tyrosine 41 coordinates L-tyrosine. Positions 46–55 match the 'HIGH' region motif; that stretch reads ATASSLHAGH. L-tyrosine-binding residues include tyrosine 175 and glutamine 179. The 'KMSKS' region signature appears at 235–239; that stretch reads KMGKT. Lysine 238 provides a ligand contact to ATP. The S4 RNA-binding domain occupies 349 to 416; the sequence is LPVAKAFVDA…KKKHVLLKPV (68 aa).

It belongs to the class-I aminoacyl-tRNA synthetase family. TyrS type 1 subfamily. As to quaternary structure, homodimer.

Its subcellular location is the cytoplasm. The catalysed reaction is tRNA(Tyr) + L-tyrosine + ATP = L-tyrosyl-tRNA(Tyr) + AMP + diphosphate + H(+). Functionally, catalyzes the attachment of tyrosine to tRNA(Tyr) in a two-step reaction: tyrosine is first activated by ATP to form Tyr-AMP and then transferred to the acceptor end of tRNA(Tyr). This is Tyrosine--tRNA ligase from Xanthobacter autotrophicus (strain ATCC BAA-1158 / Py2).